The following is a 249-amino-acid chain: Isoprenyl transferase (249 aa).

Asp25 is a catalytic residue. Asp25 is a Mg(2+) binding site. Residues 26–29 (GNGR), Trp30, Arg38, His42, and 70–72 (STE) each bind substrate. The Proton acceptor role is filled by Asn73. Residues Trp74, Arg76, Arg197, and 203-205 (RLS) contribute to the substrate site. Residue Glu216 participates in Mg(2+) binding.

It belongs to the UPP synthase family. Homodimer. Mg(2+) serves as cofactor.

Functionally, catalyzes the condensation of isopentenyl diphosphate (IPP) with allylic pyrophosphates generating different type of terpenoids. The protein is Isoprenyl transferase of Streptococcus thermophilus (strain CNRZ 1066).